The chain runs to 146 residues: Hemoglobin subunit beta (146 aa).

In terms of domain architecture, Globin spans 2–146 (EWTDFERATI…VVNSLGRQYH (145 aa)). Residues His-63 and His-92 each coordinate heme b.

Belongs to the globin family. As to quaternary structure, heterotetramer of two alpha chains and two beta chains. Can form polymers. In terms of tissue distribution, red blood cells.

Its function is as follows. Involved in oxygen transport from gills to the various peripheral tissues. In Chelidonichthys kumu (Bluefin gurnard), this protein is Hemoglobin subunit beta (hbb).